The following is a 228-amino-acid chain: Geranylgeranylglyceryl phosphate synthase (228 aa).

K13 serves as a coordination point for sn-glycerol 1-phosphate. Mg(2+) contacts are provided by D15 and T41. Sn-glycerol 1-phosphate contacts are provided by residues Y159–G164, G189, and G209–N210.

It belongs to the GGGP/HepGP synthase family. Group I subfamily. Requires Mg(2+) as cofactor.

Its subcellular location is the cytoplasm. The enzyme catalyses sn-glycerol 1-phosphate + (2E,6E,10E)-geranylgeranyl diphosphate = sn-3-O-(geranylgeranyl)glycerol 1-phosphate + diphosphate. It functions in the pathway membrane lipid metabolism; glycerophospholipid metabolism. In terms of biological role, prenyltransferase that catalyzes the transfer of the geranylgeranyl moiety of geranylgeranyl diphosphate (GGPP) to the C3 hydroxyl of sn-glycerol-1-phosphate (G1P). This reaction is the first ether-bond-formation step in the biosynthesis of archaeal membrane lipids. In Methanosphaerula palustris (strain ATCC BAA-1556 / DSM 19958 / E1-9c), this protein is Geranylgeranylglyceryl phosphate synthase.